The sequence spans 203 residues: ATP-dependent Clp protease proteolytic subunit 2 (203 aa).

The Nucleophile role is filled by serine 100. Histidine 125 is a catalytic residue.

This sequence belongs to the peptidase S14 family. In terms of assembly, fourteen ClpP subunits assemble into 2 heptameric rings which stack back to back to give a disk-like structure with a central cavity, resembling the structure of eukaryotic proteasomes.

It localises to the cytoplasm. The catalysed reaction is Hydrolysis of proteins to small peptides in the presence of ATP and magnesium. alpha-casein is the usual test substrate. In the absence of ATP, only oligopeptides shorter than five residues are hydrolyzed (such as succinyl-Leu-Tyr-|-NHMec, and Leu-Tyr-Leu-|-Tyr-Trp, in which cleavage of the -Tyr-|-Leu- and -Tyr-|-Trp bonds also occurs).. In terms of biological role, cleaves peptides in various proteins in a process that requires ATP hydrolysis. Has a chymotrypsin-like activity. Plays a major role in the degradation of misfolded proteins. This chain is ATP-dependent Clp protease proteolytic subunit 2, found in Nocardia farcinica (strain IFM 10152).